We begin with the raw amino-acid sequence, 279 residues long: Threonylcarbamoyl-AMP synthase (279 aa).

The transit peptide at 1–55 (MSPARRCRGMRAAVAASVGLSEGPAGSRSGRLFRPPSPAPAAPGARLLRLPGSGA) directs the protein to the mitochondrion. Residues 21–41 (SEGPAGSRSGRLFRPPSPAPA) are disordered. Ser-60 carries the phosphoserine modification. Residues 67-257 (TEALRAAVAE…KFGIIRPGCA (191 aa)) form the YrdC-like domain.

Belongs to the SUA5 family. In terms of assembly, interacts with RSC1A1. In terms of tissue distribution, ubiquitously expressed.

The protein localises to the cytoplasm. Its subcellular location is the mitochondrion. The protein resides in the cell membrane. It carries out the reaction L-threonine + hydrogencarbonate + ATP = L-threonylcarbamoyladenylate + diphosphate + H2O. Cytoplasmic and mitochondrial threonylcarbamoyl-AMP synthase required for the formation of a threonylcarbamoyl group on adenosine at position 37 (t(6)A37) in tRNAs that read codons beginning with adenine. Catalyzes the conversion of L-threonine, HCO(3)(-)/CO(2) and ATP to give threonylcarbamoyl-AMP (TC-AMP) as the acyladenylate intermediate, with the release of diphosphate. Participates in t(6)A37 formation in cytoplasmic and mitochondrial tRNAs. May regulate the activity of some transporters. This chain is Threonylcarbamoyl-AMP synthase, found in Homo sapiens (Human).